Here is a 427-residue protein sequence, read N- to C-terminus: UPF0229 protein YeaH (427 aa).

Residues 79-90 (NDHFVQNDRIER) show a composition bias toward basic and acidic residues. Residues 79–110 (NDHFVQNDRIERPQGGGGGSGSGQGQASQDGE) form a disordered region. Residues 92–102 (QGGGGGSGSGQ) are compositionally biased toward gly residues.

It belongs to the UPF0229 family.

The protein is UPF0229 protein YeaH of Escherichia coli O9:H4 (strain HS).